Reading from the N-terminus, the 137-residue chain is Large ribosomal subunit protein uL16 (137 aa).

It belongs to the universal ribosomal protein uL16 family. Part of the 50S ribosomal subunit.

Its function is as follows. Binds 23S rRNA and is also seen to make contacts with the A and possibly P site tRNAs. The sequence is that of Large ribosomal subunit protein uL16 from Psychrobacter cryohalolentis (strain ATCC BAA-1226 / DSM 17306 / VKM B-2378 / K5).